Reading from the N-terminus, the 598-residue chain is Elongation factor 4 (598 aa).

Positions 4–186 (SRLRNFSIIA…EIVKKIPPPK (183 aa)) constitute a tr-type G domain. GTP-binding positions include 16–21 (DHGKST) and 133–136 (NKID).

Belongs to the TRAFAC class translation factor GTPase superfamily. Classic translation factor GTPase family. LepA subfamily.

It localises to the cell inner membrane. The catalysed reaction is GTP + H2O = GDP + phosphate + H(+). Functionally, required for accurate and efficient protein synthesis under certain stress conditions. May act as a fidelity factor of the translation reaction, by catalyzing a one-codon backward translocation of tRNAs on improperly translocated ribosomes. Back-translocation proceeds from a post-translocation (POST) complex to a pre-translocation (PRE) complex, thus giving elongation factor G a second chance to translocate the tRNAs correctly. Binds to ribosomes in a GTP-dependent manner. This Pelobacter propionicus (strain DSM 2379 / NBRC 103807 / OttBd1) protein is Elongation factor 4.